Consider the following 138-residue polypeptide: Small ribosomal subunit protein bS16 (138 aa).

The disordered stretch occupies residues 92-138; it reads QAAKREADAKQAAKEAAEAKAAAEAEAKAAAEAESADAGAEEAPAEA. Positions 94-122 are enriched in basic and acidic residues; the sequence is AKREADAKQAAKEAAEAKAAAEAEAKAAA.

Belongs to the bacterial ribosomal protein bS16 family.

The protein is Small ribosomal subunit protein bS16 of Synechococcus sp. (strain WH7803).